The sequence spans 883 residues: Valine--tRNA ligase (883 aa).

The 'HIGH' region signature appears at P46–H56. A 'KMSKS' region motif is present at residues K520–S524. K523 contacts ATP. Residues L809–R844 are a coiled coil.

It belongs to the class-I aminoacyl-tRNA synthetase family. ValS type 1 subfamily. As to quaternary structure, monomer.

It is found in the cytoplasm. It carries out the reaction tRNA(Val) + L-valine + ATP = L-valyl-tRNA(Val) + AMP + diphosphate. Functionally, catalyzes the attachment of valine to tRNA(Val). As ValRS can inadvertently accommodate and process structurally similar amino acids such as threonine, to avoid such errors, it has a 'posttransfer' editing activity that hydrolyzes mischarged Thr-tRNA(Val) in a tRNA-dependent manner. The protein is Valine--tRNA ligase of Streptococcus agalactiae serotype V (strain ATCC BAA-611 / 2603 V/R).